Here is a 425-residue protein sequence, read N- to C-terminus: Keratin, type II cytoskeletal I (425 aa).

Residues 1-16 form a coil 1A region; sequence FLEQQNKVLETKWKLL. The IF rod domain maps to 1-296; it reads FLEQQNKVLE…YMLEGEEGRI (296 aa). A linker 1 region spans residues 17-37; the sequence is QEQGTKGTTKRANLDPLFEKY. Residues 38–129 are coil 1B; the sequence is IADLKKYLDN…TRDAAELSQV (92 aa). The interval 130-153 is linker 12; that stretch reads HDQVTDTSVVLTMDNNRDLNLDSI. Positions 154–292 are coil 2; that stretch reads IKEVKCQYEQ…STYRYMLEGE (139 aa). The tail stretch occupies residues 293–425; the sequence is EGRISGQIVN…STTSTTKKTY (133 aa).

This sequence belongs to the intermediate filament family. Heterotetramer of two type I and two type II keratins.

This is Keratin, type II cytoskeletal I from Xenopus laevis (African clawed frog).